Consider the following 177-residue polypeptide: Large ribosomal subunit protein uL6 (177 aa).

The protein belongs to the universal ribosomal protein uL6 family. As to quaternary structure, part of the 50S ribosomal subunit.

In terms of biological role, this protein binds to the 23S rRNA, and is important in its secondary structure. It is located near the subunit interface in the base of the L7/L12 stalk, and near the tRNA binding site of the peptidyltransferase center. This Colwellia psychrerythraea (strain 34H / ATCC BAA-681) (Vibrio psychroerythus) protein is Large ribosomal subunit protein uL6.